A 510-amino-acid polypeptide reads, in one-letter code: Light-independent protochlorophyllide reductase subunit B (510 aa).

D36 contacts [4Fe-4S] cluster. Residue D296 is the Proton donor of the active site. 431 to 432 lines the substrate pocket; sequence GM.

This sequence belongs to the ChlB/BchB/BchZ family. As to quaternary structure, protochlorophyllide reductase is composed of three subunits; ChlL, ChlN and ChlB. Forms a heterotetramer of two ChlB and two ChlN subunits. [4Fe-4S] cluster is required as a cofactor.

It catalyses the reaction chlorophyllide a + oxidized 2[4Fe-4S]-[ferredoxin] + 2 ADP + 2 phosphate = protochlorophyllide a + reduced 2[4Fe-4S]-[ferredoxin] + 2 ATP + 2 H2O. The protein operates within porphyrin-containing compound metabolism; chlorophyll biosynthesis (light-independent). Functionally, component of the dark-operative protochlorophyllide reductase (DPOR) that uses Mg-ATP and reduced ferredoxin to reduce ring D of protochlorophyllide (Pchlide) to form chlorophyllide a (Chlide). This reaction is light-independent. The NB-protein (ChlN-ChlB) is the catalytic component of the complex. The sequence is that of Light-independent protochlorophyllide reductase subunit B from Synechococcus sp. (strain JA-2-3B'a(2-13)) (Cyanobacteria bacterium Yellowstone B-Prime).